We begin with the raw amino-acid sequence, 175 residues long: UPF0398 protein SPD_0338 (175 aa).

This sequence belongs to the UPF0398 family.

This is UPF0398 protein SPD_0338 from Streptococcus pneumoniae serotype 2 (strain D39 / NCTC 7466).